Here is a 271-residue protein sequence, read N- to C-terminus: High mobility group protein homolog TDP-1 (271 aa).

A DEK-C domain is found at 8 to 63 (GPLPTDIEETVITIMREEGVRYITAKILRMRLESKYQMEFGPHKAAIDDIVARAMQ). Residues 75-118 (LKEKDASKSSGGKGSKRARSAGAEAPSKTKKEMTEKPKKPADYP) are disordered. Positions 101 to 116 (SKTKKEMTEKPKKPAD) are enriched in basic and acidic residues. DNA-binding regions (HMG box) lie at residues 118–186 (PKPA…DEYK) and 206–270 (PKRA…AALP).

It localises to the nucleus. In terms of biological role, unknown. May play a role in transcription and/or DNA replication. It is not known whether this protein is DNA sequence binding-specific or not. The protein is High mobility group protein homolog TDP-1 of Trypanosoma brucei rhodesiense.